A 1210-amino-acid chain; its full sequence is Histone-lysine N-methyltransferase EHMT2 (1210 aa).

Residues 1-23 (MAAAAGAAAAAAAEGEAPAEMGA) show a composition bias toward low complexity. Disordered regions lie at residues 1 to 262 (MAAA…LEEW) and 280 to 386 (DERV…EYME). An N-acetylalanine modification is found at Ala2. Residues 26–38 (LEKETRGATERVH) are compositionally biased toward basic and acidic residues. A Phosphoserine modification is found at Ser40. Thr44 carries the post-translational modification Phosphothreonine. Ser47 carries the phosphoserine modification. Positions 105–128 (GRILLGHATKSFPSSPSKGGSCPS) are enriched in low complexity. The residue at position 140 (Ser140) is a Phosphoserine. Over residues 155-165 (PGAQGAAAAGS) the composition is skewed to low complexity. Residue Ser173 is modified to Phosphoserine. The residue at position 185 (Lys185) is an N6,N6,N6-trimethyllysine; by EHMT2; alternate. Lys185 bears the N6,N6-dimethyllysine; by EHMT2; alternate mark. A compositionally biased stretch (basic and acidic residues) spans 198 to 216 (PEKRPPEIQHFRMSDDVHS). Residues Lys219 and Lys229 each participate in a glycyl lysine isopeptide (Lys-Gly) (interchain with G-Cter in SUMO2) cross-link. Ser232, Ser242, and Ser246 each carry phosphoserine. Positions 280 to 291 (DERVDSDSKSEV) are enriched in basic and acidic residues. The segment covering 298-327 (LSEEEEEEEEEEEEEEEEEEEEEEEEDEES) has biased composition (acidic residues). The span at 338 to 347 (GRRKAKKKWR) shows a compositional bias: basic residues. Residues Ser350, Ser412, and Ser413 each carry the phosphoserine modification. The segment at 548-608 (IPRGDGVTPP…LADTIDSSGP (61 aa)) is disordered. Phosphothreonine is present on Thr555. Ser569 carries the post-translational modification Phosphoserine. Lys634 participates in a covalent cross-link: Glycyl lysine isopeptide (Lys-Gly) (interchain with G-Cter in SUMO2). ANK repeat units lie at residues 649 to 678 (FHPR…DPNF), 684 to 713 (SKRT…NINA), 717 to 746 (QQRT…CVYS), 750 to 780 (DGST…DVNA), 784 to 813 (GGWT…DVTL), 817 to 846 (EENI…DLHA), and 850 to 879 (HGDT…NPEL). Positions 817 to 819 (EEN) are histone H3K9me binding. Residues 972-1035 (QHCTCVDDCS…NCKNRVVQSG (64 aa)) form the Pre-SET domain. Positions 974, 976, 980, 985, 987, 1017, 1021, 1023, and 1027 each coordinate Zn(2+). Residues 1038–1155 (VRLQLYRTAK…TGEELGFDYG (118 aa)) enclose the SET domain. Residues 1048 to 1050 (MGW), Tyr1085, and 1112 to 1113 (NH) each bind S-adenosyl-L-methionine. The interaction with histone H3 stretch occupies residues 1074 to 1093 (DAEADVREDDSYLFDLDNKD). Cys1115 provides a ligand contact to Zn(2+). The segment at 1154 to 1157 (YGDR) is interaction with histone H3. Residues 1164–1180 (KYFTCQCGSEKCKHSAE) form the Post-SET domain. Cys1168 is a binding site for Zn(2+). Gln1169 provides a ligand contact to S-adenosyl-L-methionine. Positions 1170 and 1175 each coordinate Zn(2+). A Phosphoserine modification is found at Ser1204. Thr1210 bears the Phosphothreonine mark.

This sequence belongs to the class V-like SAM-binding methyltransferase superfamily. Histone-lysine methyltransferase family. Suvar3-9 subfamily. Heterodimer; heterodimerizes with EHMT1/GLP. Interacts with GFI1B and WIZ. Part of the E2F6.com-1 complex in G0 phase composed of E2F6, MGA, MAX, TFDP1, CBX3, BAT8, EHMT1, RING1, RNF2, MBLR, L3MBTL2 and YAF2. Part of a complex composed of TRIM28, HDAC1, HDAC2 and EHMT2. Interacts with UHRF1. Interacts with CDYL. Interacts with REST only in the presence of CDYL. Part of a complex containing at least CDYL, REST, WIZ, SETB1, EHMT1 and EHMT2. Interacts with PRDM9 and CDYL; interaction only takes place when PRDM9 is bound to hotspot DNA. Interacts with SMYD5. In terms of processing, methylated at Lys-185; automethylated. As to expression, expressed in all tissues examined, with high levels in fetal liver, thymus, lymph node, spleen and peripheral blood leukocytes and lower level in bone marrow.

It localises to the nucleus. Its subcellular location is the chromosome. It catalyses the reaction N(6)-methyl-L-lysyl(9)-[histone H3] + S-adenosyl-L-methionine = N(6),N(6)-dimethyl-L-lysyl(9)-[histone H3] + S-adenosyl-L-homocysteine + H(+). The enzyme catalyses L-lysyl(9)-[histone H3] + S-adenosyl-L-methionine = N(6)-methyl-L-lysyl(9)-[histone H3] + S-adenosyl-L-homocysteine + H(+). In terms of biological role, histone methyltransferase that specifically mono- and dimethylates 'Lys-9' of histone H3 (H3K9me1 and H3K9me2, respectively) in euchromatin. H3K9me represents a specific tag for epigenetic transcriptional repression by recruiting HP1 proteins to methylated histones. Also mediates monomethylation of 'Lys-56' of histone H3 (H3K56me1) in G1 phase, leading to promote interaction between histone H3 and PCNA and regulating DNA replication. Also weakly methylates 'Lys-27' of histone H3 (H3K27me). Also required for DNA methylation, the histone methyltransferase activity is not required for DNA methylation, suggesting that these 2 activities function independently. Probably targeted to histone H3 by different DNA-binding proteins like E2F6, MGA, MAX and/or DP1. May also methylate histone H1. In addition to the histone methyltransferase activity, also methylates non-histone proteins: mediates dimethylation of 'Lys-373' of p53/TP53. Also methylates CDYL, WIZ, ACIN1, DNMT1, HDAC1, ERCC6, KLF12 and itself. In Homo sapiens (Human), this protein is Histone-lysine N-methyltransferase EHMT2 (EHMT2).